The primary structure comprises 269 residues: Undecaprenyl-diphosphatase (269 aa).

The next 8 membrane-spanning stretches (helical) occupy residues 4-24, 50-70, 86-106, 113-133, 146-166, 186-206, 220-240, and 246-266; these read IELWTAVLAGVVQGITEWLPI, LWLHAGTLLAVLLRFGVPYWL, LFAIVATVCTAVVGLPVYKVL, ATGDAVQMAIGGALIVTGLLL, VNVVDAVIVGLGQGFSVIPGI, AVWLSFYLAGPAMLGATALEL, WMVTAIGVSFVVSLICMEVLL, and LDFSKVCLLLGGIALLVPLAA.

This sequence belongs to the UppP family.

It localises to the cell membrane. The catalysed reaction is di-trans,octa-cis-undecaprenyl diphosphate + H2O = di-trans,octa-cis-undecaprenyl phosphate + phosphate + H(+). Its function is as follows. Catalyzes the dephosphorylation of undecaprenyl diphosphate (UPP). This chain is Undecaprenyl-diphosphatase, found in Methanopyrus kandleri (strain AV19 / DSM 6324 / JCM 9639 / NBRC 100938).